A 153-amino-acid polypeptide reads, in one-letter code: Peritrophin-1 (153 aa).

The N-terminal stretch at 1 to 17 (MKVSASLVLLLAAAVLA) is a signal peptide. Chitin-binding type-2 domains follow at residues 18 to 79 (DDRC…QCAP) and 92 to 153 (SPNC…QCEE). Cystine bridges form between Cys-56–Cys-69 and Cys-130–Cys-143. Residue Asn-63 is glycosylated (N-linked (GlcNAc...) asparagine).

Glycosylated. Adult peritrophic membrane.

Functionally, binds chitin but not cellulose. May be involved in the spatial organization of PM. This is Peritrophin-1 (Aper1) from Anopheles gambiae (African malaria mosquito).